The primary structure comprises 579 residues: Peptidoglycan D,D-transpeptidase FtsI (579 aa).

Residues 15-35 (FCVIVGLLLAMVGAIVWRIVD) traverse the membrane as a helical segment. S294 acts as the Acyl-ester intermediate in catalysis. Residues 558–579 (DNLPTATEQQQVNAAPAKGGRG) are disordered. Polar residues predominate over residues 561 to 570 (PTATEQQQVN).

It belongs to the transpeptidase family. FtsI subfamily.

The protein localises to the cell inner membrane. The enzyme catalyses Preferential cleavage: (Ac)2-L-Lys-D-Ala-|-D-Ala. Also transpeptidation of peptidyl-alanyl moieties that are N-acyl substituents of D-alanine.. Its pathway is cell wall biogenesis; peptidoglycan biosynthesis. Catalyzes cross-linking of the peptidoglycan cell wall at the division septum. Binds penicillin. The polypeptide is Peptidoglycan D,D-transpeptidase FtsI (Pseudomonas aeruginosa (strain ATCC 15692 / DSM 22644 / CIP 104116 / JCM 14847 / LMG 12228 / 1C / PRS 101 / PAO1)).